The primary structure comprises 1935 residues: Myosin-7 (1935 aa).

Residues 32 to 81 (DLKKDVFVPDDKEEFVKAKIISREGGKITAETEHGKTVTVKEDQVLQQNP) enclose the Myosin N-terminal SH3-like domain. The Myosin motor domain occupies 85-778 (DKIEDMAMLT…LLGLLEEMRD (694 aa)). An N6,N6,N6-trimethyllysine modification is found at lysine 129. 178-185 (GESGAGKT) provides a ligand contact to ATP. Threonine 378 bears the Phosphothreonine mark. Actin-binding stretches follow at residues 655 to 677 (LNKL…IPNE) and 757 to 771 (RFGH…GLLG). In terms of domain architecture, IQ spans 781–810 (LSRIITRIQAQSRGVLARMEFKKLLERRDS). Residues 839–1935 (LLKSAETEKE…DIGTKGLNEE (1097 aa)) adopt a coiled-coil conformation. Serine 1137 and serine 1269 each carry phosphoserine. A Phosphothreonine modification is found at threonine 1282. Position 1308 is a phosphotyrosine (tyrosine 1308). Threonine 1309 is subject to Phosphothreonine. Serine 1510 bears the Phosphoserine mark. Position 1513 is a phosphothreonine (threonine 1513). The interval 1907-1935 (EERADIAESQVNKLRAKSRDIGTKGLNEE) is disordered. Over residues 1923 to 1935 (KSRDIGTKGLNEE) the composition is skewed to basic and acidic residues.

It belongs to the TRAFAC class myosin-kinesin ATPase superfamily. Myosin family. In terms of assembly, muscle myosin is a hexameric protein that consists of 2 heavy chain subunits (MHC), 2 alkali light chain subunits (MLC) and 2 regulatory light chain subunits (MLC-2). Interacts with ECPAS. Interacts (via C-terminus) with LRRC39.

It localises to the cytoplasm. The protein localises to the myofibril. Its subcellular location is the sarcomere. Myosins are actin-based motor molecules with ATPase activity essential for muscle contraction. Forms regular bipolar thick filaments that, together with actin thin filaments, constitute the fundamental contractile unit of skeletal and cardiac muscle. In Equus caballus (Horse), this protein is Myosin-7 (MYH7).